Here is a 680-residue protein sequence, read N- to C-terminus: DNA-directed RNA polymerase subunit beta' (680 aa).

C69, C71, C87, and C90 together coordinate Zn(2+). Residues D489, D491, and D493 each coordinate Mg(2+).

This sequence belongs to the RNA polymerase beta' chain family. RpoC1 subfamily. In terms of assembly, in plastids the minimal PEP RNA polymerase catalytic core is composed of four subunits: alpha, beta, beta', and beta''. When a (nuclear-encoded) sigma factor is associated with the core the holoenzyme is formed, which can initiate transcription. Mg(2+) is required as a cofactor. Requires Zn(2+) as cofactor.

Its subcellular location is the plastid. It localises to the chloroplast. The catalysed reaction is RNA(n) + a ribonucleoside 5'-triphosphate = RNA(n+1) + diphosphate. In terms of biological role, DNA-dependent RNA polymerase catalyzes the transcription of DNA into RNA using the four ribonucleoside triphosphates as substrates. This is DNA-directed RNA polymerase subunit beta' from Arabidopsis thaliana (Mouse-ear cress).